Here is a 93-residue protein sequence, read N- to C-terminus: MSGLRVYSTSVTGSREIKSQQSEVTRILDGKRIQYQLVDISQDNALRDEMRTLAGNPKATPPQIVNGNHYCGDYELFVEAVEQDTLQEFLKLA.

At Ser2 the chain carries N-acetylserine. The region spanning 2–93 (SGLRVYSTSV…DTLQEFLKLA (92 aa)) is the Glutaredoxin domain. O-linked (GalNAc...) threonine glycosylation occurs at Thr9.

It belongs to the SH3BGR family. In terms of assembly, homodimer. Interacts with MYO1C (via its IQ motifs); the interaction is dependent on calcium and takes place at membrane ruffles. May be glycosylated.

The protein localises to the cytoplasm. It is found in the cytosol. It localises to the cell projection. Its subcellular location is the ruffle membrane. The protein resides in the nucleus. Functionally, could act as a modulator of glutaredoxin biological activity. May play a role in cytoskeleton organization. In Mus musculus (Mouse), this protein is SH3 domain-binding glutamic acid-rich-like protein 3 (Sh3bgrl3).